A 104-amino-acid chain; its full sequence is Zinc-containing ferredoxin-1 (104 aa).

The N-terminal extension stretch occupies residues 2–37; the sequence is GIDPNYRTNRQVVGEHSGHKVYGPVEPPKVLGIHGT. Zn(2+) contacts are provided by histidine 17 and histidine 20. At lysine 30 the chain carries N6-methyllysine. Histidine 35 contacts Zn(2+). 4Fe-4S ferredoxin-type domains are found at residues 38–66 and 75–104; these read IVGVDFDLCIADGSCINACPVNVFQWYDT and KADPVNEQACIFCMACVNVCPVAAIDVKPP. Residues cysteine 46 and cysteine 52 each coordinate [3Fe-4S] cluster. Cysteine 56 contacts [4Fe-4S] cluster. Aspartate 77 is a Zn(2+) binding site. Residues cysteine 84, cysteine 87, and cysteine 90 each contribute to the [4Fe-4S] cluster site. Cysteine 94 lines the [3Fe-4S] cluster pocket.

[3Fe-4S] cluster is required as a cofactor. The cofactor is [4Fe-4S] cluster. It depends on Zn(2+) as a cofactor.

Ferredoxins are iron-sulfur proteins that transfer electrons in a wide variety of metabolic reactions. The sequence is that of Zinc-containing ferredoxin-1 (zfx1) from Sulfurisphaera tokodaii (strain DSM 16993 / JCM 10545 / NBRC 100140 / 7) (Sulfolobus tokodaii).